A 508-amino-acid chain; its full sequence is Photosystem II CP47 reaction center protein (508 aa).

6 consecutive transmembrane segments (helical) span residues 21–36, 101–115, 140–156, 203–218, 237–252, and 457–472; these read SVHI…WAGS, IAFS…IWHW, GIHL…FGAF, IAAG…FHLS, VLSS…AFVV, and SFAL…HGAR.

The protein belongs to the PsbB/PsbC family. PsbB subfamily. As to quaternary structure, PSII is composed of 1 copy each of membrane proteins PsbA, PsbB, PsbC, PsbD, PsbE, PsbF, PsbH, PsbI, PsbJ, PsbK, PsbL, PsbM, PsbT, PsbX, PsbY, PsbZ, Psb30/Ycf12, at least 3 peripheral proteins of the oxygen-evolving complex and a large number of cofactors. It forms dimeric complexes. Requires Binds multiple chlorophylls. PSII binds additional chlorophylls, carotenoids and specific lipids. as cofactor.

It localises to the plastid membrane. One of the components of the core complex of photosystem II (PSII). It binds chlorophyll and helps catalyze the primary light-induced photochemical processes of PSII. PSII is a light-driven water:plastoquinone oxidoreductase, using light energy to abstract electrons from H(2)O, generating O(2) and a proton gradient subsequently used for ATP formation. The chain is Photosystem II CP47 reaction center protein from Cuscuta reflexa (Southern Asian dodder).